Reading from the N-terminus, the 263-residue chain is Isoprenyl transferase (263 aa).

D26 is an active-site residue. Residue D26 coordinates Mg(2+). Substrate is bound by residues 27-30 (GNGR), W31, R39, H43, and 71-73 (SSE). The active-site Proton acceptor is the N74. Residues W75, R77, R191, and 197–199 (RIS) contribute to the substrate site. Residue E210 coordinates Mg(2+). The disordered stretch occupies residues 241–263 (GRTSEQIAGQQENKNTVSNEDRV). Polar residues predominate over residues 243 to 263 (TSEQIAGQQENKNTVSNEDRV).

The protein belongs to the UPP synthase family. In terms of assembly, homodimer. Requires Mg(2+) as cofactor.

Functionally, catalyzes the condensation of isopentenyl diphosphate (IPP) with allylic pyrophosphates generating different type of terpenoids. The polypeptide is Isoprenyl transferase (Nitrosomonas europaea (strain ATCC 19718 / CIP 103999 / KCTC 2705 / NBRC 14298)).